Reading from the N-terminus, the 241-residue chain is Octanoyltransferase (241 aa).

The BPL/LPL catalytic domain maps to 49–233; that stretch reads GEASELVWLL…AFGEVFGPSE (185 aa). Residues 87 to 94, 162 to 164, and 175 to 177 contribute to the substrate site; these read RGGQVTYH, AIG, and GIS. Cysteine 193 (acyl-thioester intermediate) is an active-site residue.

Belongs to the LipB family.

Its subcellular location is the cytoplasm. The enzyme catalyses octanoyl-[ACP] + L-lysyl-[protein] = N(6)-octanoyl-L-lysyl-[protein] + holo-[ACP] + H(+). The protein operates within protein modification; protein lipoylation via endogenous pathway; protein N(6)-(lipoyl)lysine from octanoyl-[acyl-carrier-protein]: step 1/2. Its function is as follows. Catalyzes the transfer of endogenously produced octanoic acid from octanoyl-acyl-carrier-protein onto the lipoyl domains of lipoate-dependent enzymes. Lipoyl-ACP can also act as a substrate although octanoyl-ACP is likely to be the physiological substrate. This chain is Octanoyltransferase, found in Nitrobacter hamburgensis (strain DSM 10229 / NCIMB 13809 / X14).